The chain runs to 99 residues: Large ribosomal subunit protein uL23 (99 aa).

The protein belongs to the universal ribosomal protein uL23 family. Part of the 50S ribosomal subunit. Contacts protein L29, and trigger factor when it is bound to the ribosome.

In terms of biological role, one of the early assembly proteins it binds 23S rRNA. One of the proteins that surrounds the polypeptide exit tunnel on the outside of the ribosome. Forms the main docking site for trigger factor binding to the ribosome. The sequence is that of Large ribosomal subunit protein uL23 from Stutzerimonas stutzeri (strain A1501) (Pseudomonas stutzeri).